Reading from the N-terminus, the 326-residue chain is High-affinity zinc uptake system protein ZnuA (326 aa).

Residues 1–22 (MIRPSSLVLAAALGTAALPARA) form the signal peptide. His59 is a binding site for Zn(2+). Residues 117–155 (GGEHEHEHEHEHEHEHEHEHDGHGHAEEQAHHDHDHSGT) show a composition bias toward basic and acidic residues. The tract at residues 117–161 (GGEHEHEHEHEHEHEHEHEHDGHGHAEEQAHHDHDHSGTDPHAWL) is disordered. Residues His158, His222, and Asp295 each contribute to the Zn(2+) site. Cys267 and Cys322 are oxidised to a cystine.

The protein belongs to the bacterial solute-binding protein 9 family. As to quaternary structure, monomer.

It is found in the periplasm. Part of the ATP-binding cassette (ABC) transport system ZnuABC involved in zinc import. Binds zinc with high affinity and specificity and delivers it to the membrane permease for translocation into the cytoplasm. This is High-affinity zinc uptake system protein ZnuA from Paracoccus denitrificans (strain Pd 1222).